We begin with the raw amino-acid sequence, 688 residues long: Lap-Emerin-Man domain protein 2 (688 aa).

Disordered stretches follow at residues 62–113 (LQKE…IDKP) and 202–227 (PQLRSPKISHRLQTSATSSPLQHKRP). Over residues 82-92 (PKYLYPSSPSK) the composition is skewed to low complexity. Residues 212-222 (RLQTSATSSPL) show a composition bias toward polar residues. A run of 2 helical transmembrane segments spans residues 318 to 338 (YLVHIFMILLGVVAAIFLALL) and 547 to 567 (KVFLFGILALSGVIFKLINFF). Thr-683 bears the Phosphothreonine mark. Ser-684 carries the phosphoserine modification.

Its subcellular location is the nucleus inner membrane. Functionally, nucleus inner membrane protein involved in meiosis. Plays a role in regulating nuclear envelope (NE) morphology and nuclear integrity, particularly during spindle pole body (SPB) extrusion or insertion through the NE, and perhaps during karyokinesis. The chain is Lap-Emerin-Man domain protein 2 (lem2) from Schizosaccharomyces pombe (strain 972 / ATCC 24843) (Fission yeast).